The sequence spans 120 residues: Small ribosomal subunit protein eS24 (120 aa).

The segment at 101–120 (RDAGTKQKKGGSKGGQGAKG) is disordered.

The protein belongs to the eukaryotic ribosomal protein eS24 family.

The polypeptide is Small ribosomal subunit protein eS24 (Saccharolobus solfataricus (strain ATCC 35092 / DSM 1617 / JCM 11322 / P2) (Sulfolobus solfataricus)).